Consider the following 404-residue polypeptide: Propionate kinase (404 aa).

This sequence belongs to the acetokinase family. PduW subfamily.

It is found in the cytoplasm. The enzyme catalyses propanoate + ATP = propanoyl phosphate + ADP. The protein operates within polyol metabolism; 1,2-propanediol degradation. In terms of biological role, works with phosphate acetyltransferase (pta) to capture exogenous propionate and regenerate propionyl-CoA during degradation of 1,2-propanediol (1,2-PD). This is Propionate kinase from Klebsiella pneumoniae (strain 342).